We begin with the raw amino-acid sequence, 255 residues long: MVAPTEIKFEVEWSNIQQGFTKLIRMIEGESEPAFNQEIMMMMHTATYRICAYKNPQQLYDKYRELIENYAIQTVLPSLREKHDECMLRELAKRWNAHKLLVRLFSRRLVYLDDSFLSKKGLPSLREVGLNCFRDQVYREMQSMAAEAILALIHKEREGEQIDRELVRNVIDVFVENGMGTLKKYEEDFERLMLQDTASYYSSKASRWIQEESCLDYTLKPQQCLQRERERVTHYLHPTTEPKLFEVRYGIIIWN.

The protein belongs to the cullin family.

The protein is Cullin-like protein 3 of Arabidopsis thaliana (Mouse-ear cress).